We begin with the raw amino-acid sequence, 486 residues long: Aspartyl/glutamyl-tRNA(Asn/Gln) amidotransferase subunit B (486 aa).

Belongs to the GatB/GatE family. GatB subfamily. Heterotrimer of A, B and C subunits.

The catalysed reaction is L-glutamyl-tRNA(Gln) + L-glutamine + ATP + H2O = L-glutaminyl-tRNA(Gln) + L-glutamate + ADP + phosphate + H(+). The enzyme catalyses L-aspartyl-tRNA(Asn) + L-glutamine + ATP + H2O = L-asparaginyl-tRNA(Asn) + L-glutamate + ADP + phosphate + 2 H(+). Functionally, allows the formation of correctly charged Asn-tRNA(Asn) or Gln-tRNA(Gln) through the transamidation of misacylated Asp-tRNA(Asn) or Glu-tRNA(Gln) in organisms which lack either or both of asparaginyl-tRNA or glutaminyl-tRNA synthetases. The reaction takes place in the presence of glutamine and ATP through an activated phospho-Asp-tRNA(Asn) or phospho-Glu-tRNA(Gln). This is Aspartyl/glutamyl-tRNA(Asn/Gln) amidotransferase subunit B from Leptospira borgpetersenii serovar Hardjo-bovis (strain JB197).